A 237-amino-acid polypeptide reads, in one-letter code: Phosphoribosylaminoimidazole-succinocarboxamide synthase (237 aa).

Belongs to the SAICAR synthetase family.

It carries out the reaction 5-amino-1-(5-phospho-D-ribosyl)imidazole-4-carboxylate + L-aspartate + ATP = (2S)-2-[5-amino-1-(5-phospho-beta-D-ribosyl)imidazole-4-carboxamido]succinate + ADP + phosphate + 2 H(+). Its pathway is purine metabolism; IMP biosynthesis via de novo pathway; 5-amino-1-(5-phospho-D-ribosyl)imidazole-4-carboxamide from 5-amino-1-(5-phospho-D-ribosyl)imidazole-4-carboxylate: step 1/2. In Proteus mirabilis (strain HI4320), this protein is Phosphoribosylaminoimidazole-succinocarboxamide synthase.